Consider the following 356-residue polypeptide: MKLNVNLPDHPYDVIIENGALANIGNWVSSLWKKQKIVLISDNHVNGLYGQKVVEQLEKSGFEVETFEFPEGEASKNLLTAEKAWNFCAEFGLTRSDGIIAFGGGVTGDLAGFVASTYMRGIHFLQIPTSLTAQVDSSIGGKTGINSKMAKNMIGTFTQPDGVLIDPEVLKTLGQREFCEGLGEVIKCALIADKALWNLLTDLSAKDLLENFAKIEEIIYRSCEVKRKVVVDDVLDNGVRLYLNFGHTIGHAVENTAGYGKVMHGEAVAIGMVQISKIAEKKGLMPLGITDEIRKMVKKYGLPDDYQPWDEALLFKALTHDKKARGTIIKTVIVPEIGTAKINEVTFEEMKEYLKK.

NAD(+)-binding positions include 71-76 (EGEASK), 105-109 (GVTGD), 129-130 (TS), K142, and K151. Positions 184, 247, and 264 each coordinate Zn(2+).

This sequence belongs to the sugar phosphate cyclases superfamily. Dehydroquinate synthase family. It depends on Co(2+) as a cofactor. Zn(2+) is required as a cofactor. Requires NAD(+) as cofactor.

Its subcellular location is the cytoplasm. The catalysed reaction is 7-phospho-2-dehydro-3-deoxy-D-arabino-heptonate = 3-dehydroquinate + phosphate. It participates in metabolic intermediate biosynthesis; chorismate biosynthesis; chorismate from D-erythrose 4-phosphate and phosphoenolpyruvate: step 2/7. Catalyzes the conversion of 3-deoxy-D-arabino-heptulosonate 7-phosphate (DAHP) to dehydroquinate (DHQ). In Lactococcus lactis subsp. cremoris (strain SK11), this protein is 3-dehydroquinate synthase.